Reading from the N-terminus, the 243-residue chain is Fibroblast growth factor 12 (243 aa).

Disordered stretches follow at residues 1 to 39 (MAAA…DGRS) and 216 to 243 (IGEK…QDST). Positions 11-38 (RQKRQARESNSDRVSASKRRSSPSKDGR) match the Bipartite nuclear localization signal motif.

Belongs to the heparin-binding growth factors family. Interacts with the C-terminal region of SCN9A. In terms of tissue distribution, brain, eye and testis; highly expressed in embryonic retina, olfactory epithelium, olfactory bulb, and in a segmental pattern of the body wall; in adult olfactory bulb, less in cerebellum, deep cerebellar nuclei, cortex and multiple midbrain structures.

The protein localises to the nucleus. In terms of biological role, involved in nervous system development and function. Involved in the positive regulation of voltage-gated sodium channel activity. Promotes neuronal excitability by elevating the voltage dependence of neuronal sodium channel SCN8A fast inactivation. The chain is Fibroblast growth factor 12 (FGF12) from Homo sapiens (Human).